Consider the following 147-residue polypeptide: Hemoglobin subunit beta (147 aa).

Valine 2 is subject to N-acetylvaline. The Globin domain maps to 3–147; the sequence is HLSAEEKGLV…VATALAHKYH (145 aa). A Phosphothreonine modification is found at threonine 13. Serine 45 carries the phosphoserine modification. Position 60 is an N6-acetyllysine (lysine 60). Histidine 64 contributes to the heme b binding site. Position 83 is an N6-acetyllysine (lysine 83). Residue histidine 93 coordinates heme b. Cysteine 94 is subject to S-nitrosocysteine. N6-acetyllysine is present on lysine 145.

The protein belongs to the globin family. As to quaternary structure, heterotetramer of two alpha chains and two beta chains. As to expression, red blood cells.

Involved in oxygen transport from the lung to the various peripheral tissues. The sequence is that of Hemoglobin subunit beta (HBB) from Scapanus orarius (Coast mole).